The chain runs to 404 residues: Cysteine desulfurase IscS (404 aa).

Residues 75 to 76 (AT), N155, Q183, and 203 to 205 (SAH) each bind pyridoxal 5'-phosphate. Residue K206 is modified to N6-(pyridoxal phosphate)lysine. T243 contributes to the pyridoxal 5'-phosphate binding site. C328 (cysteine persulfide intermediate) is an active-site residue. C328 lines the [2Fe-2S] cluster pocket.

Belongs to the class-V pyridoxal-phosphate-dependent aminotransferase family. NifS/IscS subfamily. In terms of assembly, homodimer. Forms a heterotetramer with IscU, interacts with other sulfur acceptors. It depends on pyridoxal 5'-phosphate as a cofactor.

The protein localises to the cytoplasm. The enzyme catalyses (sulfur carrier)-H + L-cysteine = (sulfur carrier)-SH + L-alanine. The protein operates within cofactor biosynthesis; iron-sulfur cluster biosynthesis. In terms of biological role, master enzyme that delivers sulfur to a number of partners involved in Fe-S cluster assembly, tRNA modification or cofactor biosynthesis. Catalyzes the removal of elemental sulfur atoms from cysteine to produce alanine. Functions as a sulfur delivery protein for Fe-S cluster synthesis onto IscU, an Fe-S scaffold assembly protein, as well as other S acceptor proteins. The sequence is that of Cysteine desulfurase IscS from Buchnera aphidicola subsp. Baizongia pistaciae (strain Bp).